A 478-amino-acid polypeptide reads, in one-letter code: CDK5 and ABL1 enzyme substrate 2 (478 aa).

Positions 1–121 (MAAAAAGGAP…GLGLDGQRQR (121 aa)) are disordered. Residues 11 to 24 (GPAPGPAGPPPPAA) show a composition bias toward pro residues. The span at 25-35 (PTSAARAPPQA) shows a compositional bias: low complexity. The span at 36-46 (LRRRGDSRRRQ) shows a compositional bias: basic residues. Residues 69–92 (EKPPPPPAEAREPPAPPPPEPPTG) show a composition bias toward pro residues. Phosphoserine is present on residues Ser-130 and Ser-208. The disordered stretch occupies residues 257–296 (SDSHGLLPTPRPSVPRTLPGSRHKPAPTKSAPASTELGSD).

The protein belongs to the cyclin family. In terms of assembly, binds to CDK3, CDK5 and ABL1. The C-terminal cyclin-box-like region binds to CDK5.

Unknown. Probably involved in G1-S cell cycle transition. The sequence is that of CDK5 and ABL1 enzyme substrate 2 (CABLES2) from Homo sapiens (Human).